We begin with the raw amino-acid sequence, 267 residues long: Ribosomal RNA small subunit methyltransferase A (267 aa).

Residues Asn-18, Leu-20, Gly-45, Glu-66, Asp-91, and Asn-112 each contribute to the S-adenosyl-L-methionine site.

It belongs to the class I-like SAM-binding methyltransferase superfamily. rRNA adenine N(6)-methyltransferase family. RsmA subfamily.

It is found in the cytoplasm. The catalysed reaction is adenosine(1518)/adenosine(1519) in 16S rRNA + 4 S-adenosyl-L-methionine = N(6)-dimethyladenosine(1518)/N(6)-dimethyladenosine(1519) in 16S rRNA + 4 S-adenosyl-L-homocysteine + 4 H(+). Its function is as follows. Specifically dimethylates two adjacent adenosines (A1518 and A1519) in the loop of a conserved hairpin near the 3'-end of 16S rRNA in the 30S particle. May play a critical role in biogenesis of 30S subunits. In Shewanella sediminis (strain HAW-EB3), this protein is Ribosomal RNA small subunit methyltransferase A.